We begin with the raw amino-acid sequence, 102 residues long: Aspartyl/glutamyl-tRNA(Asn/Gln) amidotransferase subunit C (102 aa).

It belongs to the GatC family. As to quaternary structure, heterotrimer of A, B and C subunits.

The catalysed reaction is L-glutamyl-tRNA(Gln) + L-glutamine + ATP + H2O = L-glutaminyl-tRNA(Gln) + L-glutamate + ADP + phosphate + H(+). The enzyme catalyses L-aspartyl-tRNA(Asn) + L-glutamine + ATP + H2O = L-asparaginyl-tRNA(Asn) + L-glutamate + ADP + phosphate + 2 H(+). Its function is as follows. Allows the formation of correctly charged Asn-tRNA(Asn) or Gln-tRNA(Gln) through the transamidation of misacylated Asp-tRNA(Asn) or Glu-tRNA(Gln) in organisms which lack either or both of asparaginyl-tRNA or glutaminyl-tRNA synthetases. The reaction takes place in the presence of glutamine and ATP through an activated phospho-Asp-tRNA(Asn) or phospho-Glu-tRNA(Gln). This Bordetella pertussis (strain Tohama I / ATCC BAA-589 / NCTC 13251) protein is Aspartyl/glutamyl-tRNA(Asn/Gln) amidotransferase subunit C.